A 149-amino-acid chain; its full sequence is Nucleoside diphosphate kinase (149 aa).

ATP-binding residues include lysine 9, phenylalanine 57, arginine 85, threonine 91, arginine 102, and asparagine 112. Histidine 115 (pros-phosphohistidine intermediate) is an active-site residue.

This sequence belongs to the NDK family. It depends on Mg(2+) as a cofactor.

The protein resides in the cytoplasm. The catalysed reaction is a 2'-deoxyribonucleoside 5'-diphosphate + ATP = a 2'-deoxyribonucleoside 5'-triphosphate + ADP. It carries out the reaction a ribonucleoside 5'-diphosphate + ATP = a ribonucleoside 5'-triphosphate + ADP. Its function is as follows. Major role in the synthesis of nucleoside triphosphates other than ATP. The ATP gamma phosphate is transferred to the NDP beta phosphate via a ping-pong mechanism, using a phosphorylated active-site intermediate. The sequence is that of Nucleoside diphosphate kinase from Methanosarcina barkeri (strain Fusaro / DSM 804).